The following is a 180-amino-acid chain: Ribosome maturation factor RimM (180 aa).

The 80-residue stretch at 97 to 176 (EGEFFYCDLI…KITTNNAKTL (80 aa)) folds into the PRC barrel domain.

Belongs to the RimM family. In terms of assembly, binds ribosomal protein uS19.

Its subcellular location is the cytoplasm. In terms of biological role, an accessory protein needed during the final step in the assembly of 30S ribosomal subunit, possibly for assembly of the head region. Essential for efficient processing of 16S rRNA. May be needed both before and after RbfA during the maturation of 16S rRNA. It has affinity for free ribosomal 30S subunits but not for 70S ribosomes. In Helicobacter acinonychis (strain Sheeba), this protein is Ribosome maturation factor RimM.